The primary structure comprises 822 residues: Valine--tRNA ligase (822 aa).

Positions 41-51 (PNVTGQLHLGH) match the 'HIGH' region motif. The 'KMSKS' region signature appears at 511–515 (KMSKS). K514 contributes to the ATP binding site. The stretch at 765–822 (EQKGRELKEIQFLKSEILRAEKILTNKGFLEKAPREKIDLERTKLEKLKEKLAFYEKK) forms a coiled coil.

This sequence belongs to the class-I aminoacyl-tRNA synthetase family. ValS type 1 subfamily. In terms of assembly, monomer.

It localises to the cytoplasm. It carries out the reaction tRNA(Val) + L-valine + ATP = L-valyl-tRNA(Val) + AMP + diphosphate. In terms of biological role, catalyzes the attachment of valine to tRNA(Val). As ValRS can inadvertently accommodate and process structurally similar amino acids such as threonine, to avoid such errors, it has a 'posttransfer' editing activity that hydrolyzes mischarged Thr-tRNA(Val) in a tRNA-dependent manner. This chain is Valine--tRNA ligase, found in Mesomycoplasma hyopneumoniae (strain 7448) (Mycoplasma hyopneumoniae).